Reading from the N-terminus, the 257-residue chain is Small ribosomal subunit protein uS4c (257 aa).

S4 RNA-binding domains are found at residues 110–170 (MRLD…QLVN) and 189–255 (KTLP…KNYL).

It belongs to the universal ribosomal protein uS4 family. As to quaternary structure, part of the 30S ribosomal subunit. Contacts protein S5. The interaction surface between S4 and S5 is involved in control of translational fidelity.

It localises to the plastid. Its subcellular location is the chloroplast. One of the primary rRNA binding proteins, it binds directly to 16S rRNA where it nucleates assembly of the body of the 30S subunit. In terms of biological role, with S5 and S12 plays an important role in translational accuracy. The sequence is that of Small ribosomal subunit protein uS4c (rps4) from Chlamydomonas reinhardtii (Chlamydomonas smithii).